The following is a 106-amino-acid chain: Iron-sulfur cluster assembly protein CyaY (106 aa).

This sequence belongs to the frataxin family.

In terms of biological role, involved in iron-sulfur (Fe-S) cluster assembly. May act as a regulator of Fe-S biogenesis. This is Iron-sulfur cluster assembly protein CyaY from Salmonella schwarzengrund (strain CVM19633).